The sequence spans 273 residues: 3-methyl-2-oxobutanoate hydroxymethyltransferase (273 aa).

Mg(2+)-binding residues include D53 and D92. 3-methyl-2-oxobutanoate-binding positions include 53 to 54 (DS), D92, and K120. E122 contacts Mg(2+). The active-site Proton acceptor is E189.

This sequence belongs to the PanB family. In terms of assembly, homodecamer; pentamer of dimers. Requires Mg(2+) as cofactor.

Its subcellular location is the cytoplasm. It catalyses the reaction 3-methyl-2-oxobutanoate + (6R)-5,10-methylene-5,6,7,8-tetrahydrofolate + H2O = 2-dehydropantoate + (6S)-5,6,7,8-tetrahydrofolate. Its pathway is cofactor biosynthesis; (R)-pantothenate biosynthesis; (R)-pantoate from 3-methyl-2-oxobutanoate: step 1/2. Functionally, catalyzes the reversible reaction in which hydroxymethyl group from 5,10-methylenetetrahydrofolate is transferred onto alpha-ketoisovalerate to form ketopantoate. This chain is 3-methyl-2-oxobutanoate hydroxymethyltransferase, found in Cupriavidus taiwanensis (strain DSM 17343 / BCRC 17206 / CCUG 44338 / CIP 107171 / LMG 19424 / R1) (Ralstonia taiwanensis (strain LMG 19424)).